We begin with the raw amino-acid sequence, 339 residues long: Probable cytosolic iron-sulfur protein assembly protein CIAO1 (339 aa).

WD repeat units lie at residues 14–53, 59–98, 103–142, 148–187, 192–231, 250–289, and 301–339; these read HPDS…WICK, GHQR…FECV, GHEN…EYEC, SHTQ…WVCC, GHES…NEQG, FHTR…DPQQ, and AHSQ…PAGL. Residues 176-178 carry the LYR motif; required for interaction with HSC20 motif; sequence LYQ.

Belongs to the WD repeat CIA1 family. As to quaternary structure, component of the CIA complex. Interacts with CIAO2A and forms a complex with CIAO2B and MMS19; the interactions with CIAO2A and CIAO2B are mutually exclusive. Interacts with CHD1L, ERCC2, IREB2 and POLD1. Component of the MMXD complex, which includes CIAO1, ERCC2, CIAO2B, MMS19 and SLC25A5. Interacts with WT1. Interacts with CIAO3. Interacts (via LYR motif) with HSC20.

The protein resides in the cytoplasm. Functionally, key component of the cytosolic iron-sulfur protein assembly (CIA) complex, a multiprotein complex that mediates the incorporation of iron-sulfur cluster into extramitochondrial Fe/S proteins. As a CIA complex component, interacts specifically with CIAO2A or CIAO2B and MMS19 to assist different branches of iron-sulfur protein assembly, depending of its interactors. The complex CIAO1:CIAO2B:MMS19 binds to and facilitates the assembly of most cytosolic-nuclear Fe/S proteins. CIAO1:CIAO2A specifically matures ACO1 and stabilizes IREB2. Seems to specifically modulate the transactivation activity of WT1. As part of the mitotic spindle-associated MMXD complex it may play a role in chromosome segregation. This is Probable cytosolic iron-sulfur protein assembly protein CIAO1 from Rattus norvegicus (Rat).